Here is a 162-residue protein sequence, read N- to C-terminus: NADH-quinone oxidoreductase subunit I (162 aa).

4Fe-4S ferredoxin-type domains lie at 52 to 82 and 93 to 122; these read LRRY…IEAG and VRYD…EGPN. Cys-62, Cys-65, Cys-68, Cys-72, Cys-102, Cys-105, Cys-108, and Cys-112 together coordinate [4Fe-4S] cluster.

It belongs to the complex I 23 kDa subunit family. NDH-1 is composed of 14 different subunits. Subunits NuoA, H, J, K, L, M, N constitute the membrane sector of the complex. [4Fe-4S] cluster is required as a cofactor.

The protein resides in the cell inner membrane. It carries out the reaction a quinone + NADH + 5 H(+)(in) = a quinol + NAD(+) + 4 H(+)(out). Its function is as follows. NDH-1 shuttles electrons from NADH, via FMN and iron-sulfur (Fe-S) centers, to quinones in the respiratory chain. The immediate electron acceptor for the enzyme in this species is believed to be ubiquinone. Couples the redox reaction to proton translocation (for every two electrons transferred, four hydrogen ions are translocated across the cytoplasmic membrane), and thus conserves the redox energy in a proton gradient. This Nitrobacter winogradskyi (strain ATCC 25391 / DSM 10237 / CIP 104748 / NCIMB 11846 / Nb-255) protein is NADH-quinone oxidoreductase subunit I.